A 347-amino-acid polypeptide reads, in one-letter code: NHL repeat-containing protein 3 (347 aa).

The first 22 residues, 1–22 (MARAWVCLAGAAFFLSCLVLHS), serve as a signal peptide directing secretion. An NHL 1 repeat occupies 47–93 (RLDLGWPKNSEYFTGATFCVAVDSLNGLVYVAQRGDNIPKVLVFSED). N-linked (GlcNAc...) asparagine glycosylation is present at N101. NHL repeat units follow at residues 150 to 196 (TPGK…LSQD) and 200 to 243 (LWLR…FDKD). 2 N-linked (GlcNAc...) asparagine glycosylation sites follow: N206 and N278. The stretch at 294–338 (GDCSVVSTIQLADQVLPHLLEVDRKTGAVYVAEIGAKQIQKYIPW) is one NHL 4 repeat.

The protein is NHL repeat-containing protein 3 (Nhlrc3) of Mus musculus (Mouse).